A 112-amino-acid polypeptide reads, in one-letter code: Evasin P1095 (112 aa).

The signal sequence occupies residues 1-23; it reads MELNAFTILQIAVFIAVGYHANT. Disulfide bonds link Cys-48–Cys-66, Cys-52–Cys-68, and Cys-62–Cys-79. A glycan (N-linked (GlcNAc...) asparagine) is linked at Asn-51. Positions 89 to 112 are disordered; it reads GDPNDDPKINEATPQTQIFEKKRK.

It is found in the secreted. Salivary chemokine-binding protein which binds to host chemokine CXCL8. In Ixodes ricinus (Common tick), this protein is Evasin P1095.